A 305-amino-acid polypeptide reads, in one-letter code: 2-oxoacid:ferredoxin oxidoreductase subunit beta (305 aa).

[4Fe-4S] cluster contacts are provided by Cys12, Cys15, and Cys46. Residues 44–47 and His65 each bind thiamine diphosphate; that span reads IGCS. A Mg(2+)-binding site is contributed by Asp90. Residue 91–92 coordinates thiamine diphosphate; that stretch reads GD. Positions 118 and 120 each coordinate Mg(2+). 122 to 123 contributes to the thiamine diphosphate binding site; that stretch reads GL. A [4Fe-4S] cluster-binding site is contributed by Cys197.

Heterodimer composed of an alpha and a beta subunit. Requires [4Fe-4S] cluster as cofactor. It depends on thiamine diphosphate as a cofactor. Mg(2+) serves as cofactor.

It is found in the cytoplasm. The enzyme catalyses a 2-oxocarboxylate + 2 oxidized [2Fe-2S]-[ferredoxin] + CoA = an acyl-CoA + 2 reduced [2Fe-2S]-[ferredoxin] + CO2 + H(+). Functionally, catalyzes the coenzyme A-dependent oxidative decarboxylation of different 2-oxoacids such as 2-oxoglutarate, pyruvate and 2-oxobutyrate to form their CoA derivatives. This Sulfolobus sp protein is 2-oxoacid:ferredoxin oxidoreductase subunit beta.